A 293-amino-acid polypeptide reads, in one-letter code: MALPEHLQRHLEAGRALTAAGGYRGRFAPSPTGLLHLGNLQTALLSWLAARQAGGAWLLRIDDLDTPRNRAGAIEAIQSDLRWLGLKWDGPVLLQSERRGIYHSWLSWLRRSGRLFACRCSRRELADQPIYSGFCRQAVHNWGWQRQRLPSWRLRVADDDPHGSGDVVLRRADGFIAYQLATVIDELSFGINDVVRGADLREALPAQRSLFAALGEAPPRFRHGPLLCDASGQKLSKREACAGLKPLRDAGLDAAAVIGRLASGLQLVAPEARISATELLEHLTQQAINAVIS.

Residues 26–30 (RFAPS) and D62 each bind L-glutamate. The short motif at 29-39 (PSPTGLLHLGN) is the 'HIGH' region element. C118, C120, Y131, and C135 together coordinate Zn(2+). L-glutamate contacts are provided by Y178 and R196. The 'KMSKS' region signature appears at 234-238 (KLSKR). An ATP-binding site is contributed by K237.

This sequence belongs to the class-I aminoacyl-tRNA synthetase family. GluQ subfamily. It depends on Zn(2+) as a cofactor.

Functionally, catalyzes the tRNA-independent activation of glutamate in presence of ATP and the subsequent transfer of glutamate onto a tRNA(Asp). Glutamate is transferred on the 2-amino-5-(4,5-dihydroxy-2-cyclopenten-1-yl) moiety of the queuosine in the wobble position of the QUC anticodon. The sequence is that of Glutamyl-Q tRNA(Asp) synthetase from Synechococcus sp. (strain CC9605).